Here is a 234-residue protein sequence, read N- to C-terminus: Prolactin-6A1 (234 aa).

The signal sequence occupies residues 1–33 (MVKSWLRMSKKMEAGTLLMLLMSNILLWENVAS). An N-linked (GlcNAc...) asparagine glycan is attached at asparagine 61. 2 disulfides stabilise this stretch: cysteine 93–cysteine 209 and cysteine 226–cysteine 234.

This sequence belongs to the somatotropin/prolactin family.

Its subcellular location is the secreted. The sequence is that of Prolactin-6A1 (Prl6a1) from Rattus norvegicus (Rat).